A 173-amino-acid chain; its full sequence is Large ribosomal subunit protein uL10 (173 aa).

This sequence belongs to the universal ribosomal protein uL10 family. Part of the ribosomal stalk of the 50S ribosomal subunit. The N-terminus interacts with L11 and the large rRNA to form the base of the stalk. The C-terminus forms an elongated spine to which L12 dimers bind in a sequential fashion forming a multimeric L10(L12)X complex.

Its function is as follows. Forms part of the ribosomal stalk, playing a central role in the interaction of the ribosome with GTP-bound translation factors. This chain is Large ribosomal subunit protein uL10, found in Cupriavidus necator (strain ATCC 17699 / DSM 428 / KCTC 22496 / NCIMB 10442 / H16 / Stanier 337) (Ralstonia eutropha).